The following is a 468-amino-acid chain: 6-phospho-beta-galactosidase (468 aa).

Residues Gln-19, His-116, Asn-159, Glu-160, and Asn-297 each contribute to the D-galactose 6-phosphate site. Glu-160 functions as the Proton donor in the catalytic mechanism. Catalysis depends on Glu-375, which acts as the Nucleophile. Residues Ser-428, Trp-429, Lys-435, and Tyr-437 each coordinate D-galactose 6-phosphate.

Belongs to the glycosyl hydrolase 1 family.

It carries out the reaction a 6-phospho-beta-D-galactoside + H2O = D-galactose 6-phosphate + an alcohol. The protein operates within carbohydrate metabolism; lactose degradation; D-galactose 6-phosphate and beta-D-glucose from lactose 6-phosphate: step 1/1. This chain is 6-phospho-beta-galactosidase, found in Streptococcus pyogenes serotype M6 (strain ATCC BAA-946 / MGAS10394).